The following is a 223-amino-acid chain: Deoxyribose-phosphate aldolase (223 aa).

D92 (proton donor/acceptor) is an active-site residue. The active-site Schiff-base intermediate with acetaldehyde is the K158. Residue K188 is the Proton donor/acceptor of the active site.

The protein belongs to the DeoC/FbaB aldolase family. DeoC type 1 subfamily.

The protein resides in the cytoplasm. The enzyme catalyses 2-deoxy-D-ribose 5-phosphate = D-glyceraldehyde 3-phosphate + acetaldehyde. It functions in the pathway carbohydrate degradation; 2-deoxy-D-ribose 1-phosphate degradation; D-glyceraldehyde 3-phosphate and acetaldehyde from 2-deoxy-alpha-D-ribose 1-phosphate: step 2/2. In terms of biological role, catalyzes a reversible aldol reaction between acetaldehyde and D-glyceraldehyde 3-phosphate to generate 2-deoxy-D-ribose 5-phosphate. The polypeptide is Deoxyribose-phosphate aldolase (Mycobacterium avium (strain 104)).